The chain runs to 692 residues: Elongation factor G (692 aa).

Residues 8-283 form the tr-type G domain; it reads KNTRNIGIMA…AVVDYLPSPV (276 aa). Residues 17–24, 81–85, and 135–138 contribute to the GTP site; these read AHIDAGKT, DTPGH, and NKMD.

This sequence belongs to the TRAFAC class translation factor GTPase superfamily. Classic translation factor GTPase family. EF-G/EF-2 subfamily.

The protein localises to the cytoplasm. In terms of biological role, catalyzes the GTP-dependent ribosomal translocation step during translation elongation. During this step, the ribosome changes from the pre-translocational (PRE) to the post-translocational (POST) state as the newly formed A-site-bound peptidyl-tRNA and P-site-bound deacylated tRNA move to the P and E sites, respectively. Catalyzes the coordinated movement of the two tRNA molecules, the mRNA and conformational changes in the ribosome. In Exiguobacterium sp. (strain ATCC BAA-1283 / AT1b), this protein is Elongation factor G.